We begin with the raw amino-acid sequence, 88 residues long: RQC P-site tRNA stabilizing factor (88 aa).

Residues 1-67 form the S4 RNA-binding domain; sequence MRLDKFLKVS…VEITNVKETV (67 aa).

The protein belongs to the RqcP family. Associates with stalled 50S ribosomal subunits. Binds to RqcH, 23S rRNA and the P-site tRNA. Does not require RqcH for association with 50S subunits.

Functionally, key component of the ribosome quality control system (RQC), a ribosome-associated complex that mediates the extraction of incompletely synthesized nascent chains from stalled ribosomes and their subsequent degradation. RqcH recruits Ala-charged tRNA, and with RqcP directs the elongation of stalled nascent chains on 50S ribosomal subunits, leading to non-templated C-terminal alanine extensions (Ala tail). The Ala tail promotes nascent chain degradation. RqcP is associated with the translocation-like movement of the peptidyl-tRNA from the A-site into the P-site. The sequence is that of RQC P-site tRNA stabilizing factor from Halalkalibacterium halodurans (strain ATCC BAA-125 / DSM 18197 / FERM 7344 / JCM 9153 / C-125) (Bacillus halodurans).